Reading from the N-terminus, the 332-residue chain is Phosphate acyltransferase (332 aa).

The protein belongs to the PlsX family. As to quaternary structure, homodimer. Probably interacts with PlsY.

It is found in the cytoplasm. The catalysed reaction is a fatty acyl-[ACP] + phosphate = an acyl phosphate + holo-[ACP]. It participates in lipid metabolism; phospholipid metabolism. Its function is as follows. Catalyzes the reversible formation of acyl-phosphate (acyl-PO(4)) from acyl-[acyl-carrier-protein] (acyl-ACP). This enzyme utilizes acyl-ACP as fatty acyl donor, but not acyl-CoA. In Caldanaerobacter subterraneus subsp. tengcongensis (strain DSM 15242 / JCM 11007 / NBRC 100824 / MB4) (Thermoanaerobacter tengcongensis), this protein is Phosphate acyltransferase.